We begin with the raw amino-acid sequence, 424 residues long: Serine hydroxymethyltransferase 2 (424 aa).

(6S)-5,6,7,8-tetrahydrofolate is bound by residues Leu125 and 129–131; that span reads GHL. Position 234 is an N6-(pyridoxal phosphate)lysine (Lys234). Glu250 is a (6S)-5,6,7,8-tetrahydrofolate binding site.

It belongs to the SHMT family. As to quaternary structure, homodimer. Pyridoxal 5'-phosphate serves as cofactor.

The protein localises to the cytoplasm. It catalyses the reaction (6R)-5,10-methylene-5,6,7,8-tetrahydrofolate + glycine + H2O = (6S)-5,6,7,8-tetrahydrofolate + L-serine. It functions in the pathway one-carbon metabolism; tetrahydrofolate interconversion. The protein operates within amino-acid biosynthesis; glycine biosynthesis; glycine from L-serine: step 1/1. Catalyzes the reversible interconversion of serine and glycine with tetrahydrofolate (THF) serving as the one-carbon carrier. This reaction serves as the major source of one-carbon groups required for the biosynthesis of purines, thymidylate, methionine, and other important biomolecules. Also exhibits THF-independent aldolase activity toward beta-hydroxyamino acids, producing glycine and aldehydes, via a retro-aldol mechanism. This Burkholderia mallei (strain ATCC 23344) protein is Serine hydroxymethyltransferase 2.